Here is a 130-residue protein sequence, read N- to C-terminus: Small ribosomal subunit protein uS11 (130 aa).

It belongs to the universal ribosomal protein uS11 family. As to quaternary structure, part of the 30S ribosomal subunit. Interacts with proteins S7 and S18. Binds to IF-3.

Located on the platform of the 30S subunit, it bridges several disparate RNA helices of the 16S rRNA. Forms part of the Shine-Dalgarno cleft in the 70S ribosome. The polypeptide is Small ribosomal subunit protein uS11 (Helicobacter hepaticus (strain ATCC 51449 / 3B1)).